The following is a 438-amino-acid chain: Elongation factor 1-alpha (438 aa).

Positions 5-228 (KPHLNLVVIG…ALDSLEPPPK (224 aa)) constitute a tr-type G domain. The tract at residues 14 to 21 (GHVDHGKS) is G1. GTP is bound at residue 14-21 (GHVDHGKS). S21 contacts Mg(2+). Positions 70 to 74 (GVTIA) are G2. The segment at 91–94 (DAPG) is G3. Residues 91-95 (DAPGH) and 153-156 (NKMD) each bind GTP. Residues 153–156 (NKMD) are G4. Positions 194–196 (SAW) are G5.

The protein belongs to the TRAFAC class translation factor GTPase superfamily. Classic translation factor GTPase family. EF-Tu/EF-1A subfamily.

It is found in the cytoplasm. The catalysed reaction is GTP + H2O = GDP + phosphate + H(+). GTP hydrolase that promotes the GTP-dependent binding of aminoacyl-tRNA to the A-site of ribosomes during protein biosynthesis. The sequence is that of Elongation factor 1-alpha from Staphylothermus marinus (strain ATCC 43588 / DSM 3639 / JCM 9404 / F1).